The following is a 123-amino-acid chain: Kininogen (123 aa).

Post-translationally, bradykinin is released from kininogen by kallikrein. N-glycosylated. Contains sulfated N-acetylglucosamine and O-acetylated sialic acids as terminal elements on biantennary and triantennary N-glycans.

Its function is as follows. Inhibits papain and ficin (cysteine proteinases) but not trypsin (a serine proteinase). This chain is Kininogen, found in Gadus morhua (Atlantic cod).